Here is an 84-residue protein sequence, read N- to C-terminus: Large ribosomal subunit protein bL27 (84 aa).

The disordered stretch occupies residues 1–20 (MAHKKSGGASRNGRDSNPKY).

It belongs to the bacterial ribosomal protein bL27 family.

The polypeptide is Large ribosomal subunit protein bL27 (Dictyoglomus thermophilum (strain ATCC 35947 / DSM 3960 / H-6-12)).